The following is a 395-amino-acid chain: MKKEHHSPWPDSLKEFIGRCIQDAEENSQPELEDEVKLLISRQYEMGNIWNVDWSSMNLESLRKLTNAQNTIIEDKKRKVEKPVSGNQFSLLSEEDEVDKKEKRRRRFENGSRSQNNAKSEELKVNPENGAIIGRSTELEKRYLRLTSAPDPDTVRPLPVLKQTLELLKKKWKEEKNYAYICDQFKSLRQDLTVQRIQNEFSVLVYEIHARIALEKGDVGEYNQCQTQLFHLYSFGIPGNTKEFLAYRILYMLFTKNRSEMNSLLANLKEEDKTNAAVTHALEVRSAMATGDYYKFFHLYLVAPNMGGYLMDLFIERERVQAMIMMCKAYRPSLTMEFLANTLAFEEMEDCVNFFRSCNAVYDSKDPNRILMKESTDRFEKCMKKHAVVDIKGQI.

Positions 91-127 are disordered; sequence LLSEEDEVDKKEKRRRRFENGSRSQNNAKSEELKVNP. Positions 218–384 constitute a PCI domain; sequence DVGEYNQCQT…STDRFEKCMK (167 aa).

Belongs to the THP3 family.

The protein resides in the cytoplasm. Its subcellular location is the nucleus. In terms of biological role, required for transcription elongation. May also be involved in pre-mRNA splicing. This chain is THP3 homolog C2A9.11c, found in Schizosaccharomyces pombe (strain 972 / ATCC 24843) (Fission yeast).